A 166-amino-acid chain; its full sequence is Crossover junction endodeoxyribonuclease RuvC (166 aa).

Active-site residues include D9, E70, and D144. Mg(2+)-binding residues include D9, E70, and D144.

It belongs to the RuvC family. As to quaternary structure, homodimer which binds Holliday junction (HJ) DNA. The HJ becomes 2-fold symmetrical on binding to RuvC with unstacked arms; it has a different conformation from HJ DNA in complex with RuvA. In the full resolvosome a probable DNA-RuvA(4)-RuvB(12)-RuvC(2) complex forms which resolves the HJ. Requires Mg(2+) as cofactor.

It localises to the cytoplasm. It catalyses the reaction Endonucleolytic cleavage at a junction such as a reciprocal single-stranded crossover between two homologous DNA duplexes (Holliday junction).. Functionally, the RuvA-RuvB-RuvC complex processes Holliday junction (HJ) DNA during genetic recombination and DNA repair. Endonuclease that resolves HJ intermediates. Cleaves cruciform DNA by making single-stranded nicks across the HJ at symmetrical positions within the homologous arms, yielding a 5'-phosphate and a 3'-hydroxyl group; requires a central core of homology in the junction. The consensus cleavage sequence is 5'-(A/T)TT(C/G)-3'. Cleavage occurs on the 3'-side of the TT dinucleotide at the point of strand exchange. HJ branch migration catalyzed by RuvA-RuvB allows RuvC to scan DNA until it finds its consensus sequence, where it cleaves and resolves the cruciform DNA. The sequence is that of Crossover junction endodeoxyribonuclease RuvC from Neorickettsia sennetsu (strain ATCC VR-367 / Miyayama) (Ehrlichia sennetsu).